The chain runs to 203 residues: Translation machinery-associated protein 16 (203 aa).

A disordered region spans residues 1–39 (MPKAPKGKSAGREKKVIHPYSRKAAQITREAHKQEKKEK). Ser9 carries the ADP-ribosylserine modification. Residues 29 to 39 (REAHKQEKKEK) are compositionally biased toward basic and acidic residues.

Belongs to the TMA16 family. As to quaternary structure, associates with pre-60S ribosomal particles.

It is found in the nucleus. Involved in the biogenesis of the 60S ribosomal subunit in the nucleus. This chain is Translation machinery-associated protein 16 (TMA16), found in Homo sapiens (Human).